The following is an 86-amino-acid chain: 4-hydroxyphenylacetate decarboxylase small subunit (86 aa).

[4Fe-4S] cluster-binding residues include H3, C6, C19, C36, C45, C48, C62, and C80.

This sequence belongs to the HPA decarboxylase small subunit family. Heterooctamer consisting of 4 large (HpdB) subunits and 4 small (HpdC) subunits, arranged as a tetramer of heterodimers. Requires [4Fe-4S] cluster as cofactor.

The enzyme catalyses 4-hydroxyphenylacetate + H(+) = 4-methylphenol + CO2. It carries out the reaction 3,4-dihydroxyphenylacetate + H(+) = 4-methylcatechol + CO2. In terms of biological role, component of the HPA decarboxylase that decarboxylates phenylacetates with a hydroxyl group in the p-position. Active toward 4-hydroxyphenylacetate and 3,4-dihydroxyphenylacetate, forming 4-methylphenol and 4-methylcatechol, respectively. Is likely involved in the catabolism of aromatic amino acids such as tyrosine fermentation. 4-methylphenol (p-cresol) formation provides metabolic toxicity, which allows an active suppression of other microbes and may provide growth advantages for the producers in highly competitive environments. The small subunit is essential for enzymatic activity of HPA decarboxylase, and also seems to be involved in the regulation of the enzyme oligomeric state and catalytic activity. The protein is 4-hydroxyphenylacetate decarboxylase small subunit of Clostridium scatologenes.